Reading from the N-terminus, the 333-residue chain is Serine/threonine-protein phosphatase 4 catalytic subunit 1 (333 aa).

Positions 1–29 (MALAVADTQNETFARSESPTSGPSDQLST) are disordered. Polar residues predominate over residues 7 to 27 (DTQNETFARSESPTSGPSDQL). Mn(2+) contacts are provided by Asp-79, His-81, Asp-107, and Asn-139. The Proton donor role is filled by His-140. Mn(2+)-binding residues include His-189 and His-264. Position 333 is a leucine methyl ester (Leu-333).

The protein belongs to the PPP phosphatase family. PP-4 (PP-X) subfamily. In terms of assembly, serine/threonine-protein phosphatase 4 (PP4) occurs in different assemblies of the catalytic and one or more regulatory subunits. The regulatory subunits are likely to be ppfr-1, ppfr-2, ppfr-4 and smk-1. Interacts with mei-1. It depends on Mn(2+) as a cofactor. Methylation at the C-terminal Leu-333 is critical for interactions with regulatory subunits.

It localises to the cytoplasm. The protein resides in the cytoskeleton. Its subcellular location is the microtubule organizing center. The protein localises to the centrosome. The enzyme catalyses O-phospho-L-seryl-[protein] + H2O = L-seryl-[protein] + phosphate. It carries out the reaction O-phospho-L-threonyl-[protein] + H2O = L-threonyl-[protein] + phosphate. Its function is as follows. Protein phosphatase which plays an essential role in meiosis and in early embryonic mitosis. During spermatocyte meiosis and the first embryonic mitosis, regulates centrosome maturation, and thus spindle formation, by recruiting some of the components of the pericentriolar material (PCM). During oocyte meiosis I, regulates meiotic chromosome dynamics including synapsis-independent chromosome pairing, restriction of synapsis to homologous chromosomes, programmed DNA double-strand break initiation and crossover formation resulting in chiasma formation. During oocyte meiosis II and probably together with regulatory subunit ppfr-1, may regulate microtubule severing by dephosphorylating and activating mei-1, a component of the katanin microtubule severing complex. The polypeptide is Serine/threonine-protein phosphatase 4 catalytic subunit 1 (pph-4.1) (Caenorhabditis briggsae).